Here is a 260-residue protein sequence, read N- to C-terminus: MAKWGQGDPRWIVEEREDGTNVNNWHWTERDATSWSKGRLRELLVGITVENEAGRCEISELKQVEGEASCSSRKGKLIFFYEWNIKLGWKGIIRESGAKHKGLIEIPSLSEENEVDDTEVNVSKKKGDGDILKDLMKTAGTAKVREALGDYLKALKTEFTMGMILPTKAMAAQELTVERKLSENALQIQASSRVALGVRIPTVALHMTELFDTAIEQLYRIFTVKDLVQKFSKSPAVLEAEKGGKFQMLMETSPVNIQNC.

It belongs to the AHA1 family.

In terms of biological role, co-chaperone that stimulates HSP90 ATPase activity. This is Activator of 90 kDa heat shock protein ATPase homolog 2 (AHSA2) from Bos taurus (Bovine).